Here is a 485-residue protein sequence, read N- to C-terminus: NGFI-A-binding protein 1 (485 aa).

Residues 4 to 82 (ALPRTLGELQ…RDWVTNPGLF (79 aa)) are NCD1. Glycyl lysine isopeptide (Lys-Gly) (interchain with G-Cter in SUMO2) cross-links involve residues K126, K129, and K143. Residues 160 to 187 (WQGHHATESEHSLSPADVGSPASPKESS) are disordered. Phosphoserine is present on residues S171 and S182. A Glycyl lysine isopeptide (Lys-Gly) (interchain with G-Cter in SUMO2) cross-link involves residue K211. Positions 220–309 (LLKNNKKLAK…ARQVSREVTY (90 aa)) are NCD2. A necessary for nuclear localization region spans residues 306-337 (EVTYKYTYRTTRLKCGERDELSPKRIKVEDGF). Residue S327 is modified to Phosphoserine. A Glycyl lysine isopeptide (Lys-Gly) (interchain with G-Cter in SUMO1); alternate cross-link involves residue K332. Residue K332 forms a Glycyl lysine isopeptide (Lys-Gly) (interchain with G-Cter in SUMO2); alternate linkage. Glycyl lysine isopeptide (Lys-Gly) (interchain with G-Cter in SUMO2) cross-links involve residues K354, K368, and K372. Positions 398–432 (RQSSGEHSPDGLPSDGSDGQGERPLNLRMPNVQNR) are disordered. S405 carries the post-translational modification Phosphoserine. Glycyl lysine isopeptide (Lys-Gly) (interchain with G-Cter in SUMO2) cross-links involve residues K452, K463, and K475. K478 is covalently cross-linked (Glycyl lysine isopeptide (Lys-Gly) (interchain with G-Cter in SUMO1); alternate). A Glycyl lysine isopeptide (Lys-Gly) (interchain with G-Cter in SUMO2); alternate cross-link involves residue K478.

The protein belongs to the NAB family. In terms of assembly, homomultimers may associate with EGR1 bound to DNA.

Its subcellular location is the nucleus. Acts as a transcriptional repressor for zinc finger transcription factors EGR1 and EGR2. This chain is NGFI-A-binding protein 1 (NAB1), found in Mesocricetus auratus (Golden hamster).